The primary structure comprises 131 residues: Photosystem II extrinsic protein U (131 aa).

Positions 1-28 (MKFISRLLVACSLLIGLMGFLGADLAQA) are cleaved as a signal peptide. Residues 29–36 (LTPNPILA) constitute a propeptide that is removed on maturation.

This sequence belongs to the PsbU family. In terms of assembly, PSII is composed of 1 copy each of membrane proteins PsbA, PsbB, PsbC, PsbD, PsbE, PsbF, PsbH, PsbI, PsbJ, PsbK, PsbL, PsbM, PsbT, PsbX, PsbY, PsbZ, Psb30/Ycf12, peripheral proteins PsbO, CyanoQ (PsbQ), PsbU, PsbV and a large number of cofactors. It forms dimeric complexes.

The protein localises to the cellular thylakoid membrane. Its function is as follows. One of the extrinsic, lumenal subunits of photosystem II (PSII). PSII is a light-driven water plastoquinone oxidoreductase, using light energy to abstract electrons from H(2)O, generating a proton gradient subsequently used for ATP formation. The extrinsic proteins stabilize the structure of photosystem II oxygen-evolving complex (OEC), the ion environment of oxygen evolution and protect the OEC against heat-induced inactivation. May modulate the Cl(-) requirement for oxygen evolution. The polypeptide is Photosystem II extrinsic protein U (Synechocystis sp. (strain ATCC 27184 / PCC 6803 / Kazusa)).